We begin with the raw amino-acid sequence, 193 residues long: MKLLEERILKDGHILGDNILKVDSFLTHQVDFSLMREIGKVFAEKFAAAGITKVVTIEASGIAPAVFTAEALNVPMIFAKKAKNITMNEGILTAQVYSFTKQVTSTVSIAGKFLSPEDKVLIIDDFLANGQAAKGLIQIIEQAGATVQAIGIVIEKSFQDGRDLLEKAGYPVLSLARLDRFENGQVVFKEADL.

Residues leucine 20 and threonine 27 each coordinate xanthine. 128–132 contributes to the 5-phospho-alpha-D-ribose 1-diphosphate binding site; that stretch reads ANGQA. Lysine 156 lines the xanthine pocket.

It belongs to the purine/pyrimidine phosphoribosyltransferase family. Xpt subfamily. As to quaternary structure, homodimer.

It localises to the cytoplasm. It carries out the reaction XMP + diphosphate = xanthine + 5-phospho-alpha-D-ribose 1-diphosphate. Its pathway is purine metabolism; XMP biosynthesis via salvage pathway; XMP from xanthine: step 1/1. Converts the preformed base xanthine, a product of nucleic acid breakdown, to xanthosine 5'-monophosphate (XMP), so it can be reused for RNA or DNA synthesis. The sequence is that of Xanthine phosphoribosyltransferase from Streptococcus pneumoniae (strain CGSP14).